Consider the following 137-residue polypeptide: Immunoglobulin domain-containing protein oig-1 (137 aa).

The N-terminal stretch at 1 to 23 (MFSELRILRDILLLCFLSVGINA) is a signal peptide. Residues 41–133 (PKISRSSYFK…KGSRVKKFLT (93 aa)) form the Ig-like C2-type domain. Cysteines 63 and 118 form a disulfide.

In terms of tissue distribution, expressed in DD and VD GABAergic motor neurons. Expressed in a subset of head neurons including M2 motor neurons in the pharynx. Expressed in coelomocytes.

It is found in the membrane. The protein localises to the secreted. The protein resides in the extracellular space. Its subcellular location is the cell projection. It localises to the dendrite. It is found in the axon. Plays a role in neural development, where it temporally regulates synapse formation in the D-type inhibitory GABAergic motor neurons, dorsal D (DD) and ventral D (VD) motor neurons. Controls the translocation of postsynaptic proteins, such as the acetylcholine receptor subunit acr-12, and presynaptic proteins, such as snb-1, along nerve cords to prevent premature synapse remodeling/formation. The protein is Immunoglobulin domain-containing protein oig-1 of Caenorhabditis elegans.